The primary structure comprises 61 residues: Probable tautomerase stu1128 (61 aa).

Pro-2 functions as the Proton acceptor; via imino nitrogen in the catalytic mechanism.

It belongs to the 4-oxalocrotonate tautomerase family.

This Streptococcus thermophilus (strain ATCC BAA-250 / LMG 18311) protein is Probable tautomerase stu1128.